Consider the following 430-residue polypeptide: MGKFAVVLGSQWGDEGKGKVVDLLTENAAAVVRFQGGHNAGHTLVIDGKKTVLHLIPSGILREGVECMIGNGVVLSPEALMKEMAQLEAEGVPVRDRLRLSESCQLILPYHVSLDLAREQARGKAAIGTTGRGIGPAYEDKVSRRGLRLGDLFHRERFAAKLGEVLDYHNFVLQHYFKSEAVDFQQVLDQSLALAETLQPLVMDVPERLRELRAQGANVMFEGAQGTLLDIDHGTYPFVTSSNTTAGGACTGSGVGPLDLDYVLGITKAYTTRVGAGPFPTELFDAMGEHLARRGHEFGSTTGRARRCGWFDAVALRRAVAINSISGLCVTKLDVLDGLETLQLCVGYRCGDAEFSVPPAGADAFATCEPIYEEMPGWQESTLGVTRREDLPVNALRYLERIQEIIGVPVDMISTGPDRDQTIVLRHPFE.

Residues 13-19 and 41-43 contribute to the GTP site; these read GDEGKGK and GHT. Asp14 acts as the Proton acceptor in catalysis. Mg(2+) contacts are provided by Asp14 and Gly41. IMP-binding positions include 14–17, 39–42, Thr130, Arg144, Gln225, Thr240, and Arg304; these read DEGK and NAGH. The active-site Proton donor is the His42. 300-306 is a substrate binding site; it reads STTGRAR. Residues Arg306, 332 to 334, and 414 to 416 each bind GTP; these read KLD and STG.

The protein belongs to the adenylosuccinate synthetase family. As to quaternary structure, homodimer. The cofactor is Mg(2+).

Its subcellular location is the cytoplasm. It carries out the reaction IMP + L-aspartate + GTP = N(6)-(1,2-dicarboxyethyl)-AMP + GDP + phosphate + 2 H(+). It functions in the pathway purine metabolism; AMP biosynthesis via de novo pathway; AMP from IMP: step 1/2. Its function is as follows. Plays an important role in the de novo pathway of purine nucleotide biosynthesis. Catalyzes the first committed step in the biosynthesis of AMP from IMP. The sequence is that of Adenylosuccinate synthetase from Thioalkalivibrio sulfidiphilus (strain HL-EbGR7).